The following is a 365-amino-acid chain: Cobalt-precorrin-5B C(1)-methyltransferase (365 aa).

This sequence belongs to the CbiD family.

The enzyme catalyses Co-precorrin-5B + S-adenosyl-L-methionine = Co-precorrin-6A + S-adenosyl-L-homocysteine. It functions in the pathway cofactor biosynthesis; adenosylcobalamin biosynthesis; cob(II)yrinate a,c-diamide from sirohydrochlorin (anaerobic route): step 6/10. Catalyzes the methylation of C-1 in cobalt-precorrin-5B to form cobalt-precorrin-6A. The sequence is that of Cobalt-precorrin-5B C(1)-methyltransferase from Methanococcus maripaludis (strain DSM 14266 / JCM 13030 / NBRC 101832 / S2 / LL).